Consider the following 524-residue polypeptide: Zinc finger CCCH domain-containing protein 37 (524 aa).

Positions alanine 19 to leucine 39 are disordered. The segment covering proline 24 to proline 35 has biased composition (pro residues). 3 consecutive C3H1-type zinc fingers follow at residues arginine 174–tryptophan 202, arginine 225–glutamate 253, and arginine 268–aspartate 296. Residues proline 300 to threonine 319 form a disordered region. 3 consecutive C3H1-type zinc fingers follow at residues arginine 340–arginine 368, arginine 420–aspartate 448, and arginine 473–proline 501. Residues methionine 505–glutamine 524 form a disordered region. Residues alanine 512 to glutamine 524 show a composition bias toward low complexity.

As to quaternary structure, interacts with HEN4. Interacts with FLK and PEP. In terms of tissue distribution, highly expressed in inflorescences, at intermediate levels in leaves and stems and at lower levels in roots.

The protein localises to the nucleus speckle. Its function is as follows. Involved in flower development. Functions in floral reproductive organ identity by binding AGAMOUS (AG) pre-mRNA and promoting its processing. Functions in association with HUA2 and HEN4. The protein is Zinc finger CCCH domain-containing protein 37 (HUA1) of Arabidopsis thaliana (Mouse-ear cress).